The following is a 675-amino-acid chain: Polyamine deacetylase HDAC10 (675 aa).

Asp-22 contacts substrate. Positions 23–26 match the Substrate specificity motif; the sequence is PACE. Asp-94 is a substrate binding site. The active-site Proton donor/acceptor is the His-137. Zn(2+)-binding residues include Asp-174, His-176, and Asp-267. Tyr-307 contacts substrate. The tract at residues 362–399 is disordered; it reads LAQSETNPKRPRLDATNGGPKESSEPASESNPKKTAQD.

The protein belongs to the histone deacetylase family. HD type 2 subfamily.

Its subcellular location is the cytoplasm. It localises to the nucleus. It carries out the reaction N(8)-acetylspermidine + H2O = spermidine + acetate. It catalyses the reaction N-acetylputrescine + H2O = putrescine + acetate. The enzyme catalyses N-acetylcadaverine + H2O = cadaverine + acetate. Polyamine deacetylase (PDAC), which acts preferentially on N(8)-acetylspermidine, and also on acetylcadaverine and acetylputrescine. Exhibits attenuated catalytic activity toward N(1),N(8)-diacetylspermidine and very low activity, if any, toward N(1)-acetylspermidine. Has a very weak lysine deacetylase, if any. This Danio rerio (Zebrafish) protein is Polyamine deacetylase HDAC10 (hdac10).